We begin with the raw amino-acid sequence, 182 residues long: Protein transport protein gos1 (182 aa).

Topologically, residues 1 to 163 (MKSMLLRDSV…RKTSIRRRRD (163 aa)) are cytoplasmic. A helical; Anchor for type IV membrane protein transmembrane segment spans residues 164–181 (SIILALLISVLMLLFLFF). His-182 is a topological domain (vesicular).

The protein belongs to the GOSR1 family. In terms of assembly, component of a SNARE complex consisting of sed5, gos1, ykt6, and sft1.

The protein resides in the golgi apparatus membrane. Nonessential SNARE involved in retrograde transport within the Golgi complex. The sequence is that of Protein transport protein gos1 (gos1) from Schizosaccharomyces pombe (strain 972 / ATCC 24843) (Fission yeast).